A 294-amino-acid polypeptide reads, in one-letter code: Putative glucose-6-phosphate 1-epimerase (294 aa).

The substrate site is built by R74 and R99. H164 is a catalytic residue. D208 serves as a coordination point for substrate. Residue E267 is part of the active site.

Belongs to the glucose-6-phosphate 1-epimerase family. Monomer in solution.

It catalyses the reaction alpha-D-glucose 6-phosphate = beta-D-glucose 6-phosphate. In Escherichia coli (strain K12), this protein is Putative glucose-6-phosphate 1-epimerase (yeaD).